Consider the following 182-residue polypeptide: CKLF-like MARVEL transmembrane domain-containing protein 3 (182 aa).

Positions 1 to 12 (MWPPDPDPDPDP) are enriched in acidic residues. A disordered region spans residues 1–21 (MWPPDPDPDPDPEPAGGSRPG). One can recognise an MARVEL domain in the interval 36 to 155 (FLCSLKGRLL…DFYLIFNDVA (120 aa)). A run of 3 helical transmembrane segments spans residues 64-84 (ASAF…FLFA), 101-121 (MDFL…ITAI), and 131-151 (AAGV…YLIF).

Belongs to the chemokine-like factor family. In terms of tissue distribution, expressed in the leukocytes, placenta and testis.

It localises to the membrane. In Homo sapiens (Human), this protein is CKLF-like MARVEL transmembrane domain-containing protein 3 (CMTM3).